The following is a 443-amino-acid chain: MITIKKGLDLPINGKPEQVIRDGNAVTEVALLGEEYVGMRPSMKIHEGDTVKKGQILFEDKKNPGVVFTAPVSGTVTAINRGAKRVLQSVVIRVEGNDQETFAKYSPAELVSLSSEQVRQNLQTSGLWTALRTRPLSKIPAVDAVPSSIFVNAMDTNPLCADPAVIINEYQADFTNGLTVLTRLHNKVNLCKAAGSNIASVDNVDSHEFAGVHPAGLVGTHIHFIDPVGINKSVWHINYQDVIAIGKLFTTGELFTDRVVALAGPQVKNPRLVRTNIGANLSQLTANELADGNNRVISGSVLYGAKAEGAHDYLGRYALQVSVIAEDTEKEFFGWISPQANKYSITRTVLGHFGRKLFNFTTAENGGHRAMVPIGSYERVMPLDILPTLLLRDLEVGDTDSAQALGALELDEEDLALCTFVCPGKADYGSFLRQALDKIEKEG.

This sequence belongs to the NqrA family. Composed of six subunits; NqrA, NqrB, NqrC, NqrD, NqrE and NqrF.

The catalysed reaction is a ubiquinone + n Na(+)(in) + NADH + H(+) = a ubiquinol + n Na(+)(out) + NAD(+). NQR complex catalyzes the reduction of ubiquinone-1 to ubiquinol by two successive reactions, coupled with the transport of Na(+) ions from the cytoplasm to the periplasm. NqrA to NqrE are probably involved in the second step, the conversion of ubisemiquinone to ubiquinol. In Mannheimia succiniciproducens (strain KCTC 0769BP / MBEL55E), this protein is Na(+)-translocating NADH-quinone reductase subunit A.